The chain runs to 428 residues: GTPase Obg (428 aa).

The Obg domain occupies 1–158 (MFVDQVKIYV…RYVTLELKLL (158 aa)). Positions 159 to 329 (ADVGLVGFPS…LLFAIADLLE (171 aa)) constitute an OBG-type G domain. GTP-binding positions include 165 to 172 (GFPSVGKS), 190 to 194 (FTTIV), 212 to 215 (DLPG), 282 to 285 (NKMD), and 310 to 312 (SAV). Positions 172 and 192 each coordinate Mg(2+). In terms of domain architecture, OCT spans 350–428 (KLEKEEAPFH…LLNYEFEFVD (79 aa)).

This sequence belongs to the TRAFAC class OBG-HflX-like GTPase superfamily. OBG GTPase family. Monomer. Mg(2+) is required as a cofactor.

The protein resides in the cytoplasm. An essential GTPase which binds GTP, GDP and possibly (p)ppGpp with moderate affinity, with high nucleotide exchange rates and a fairly low GTP hydrolysis rate. Plays a role in control of the cell cycle, stress response, ribosome biogenesis and in those bacteria that undergo differentiation, in morphogenesis control. This Anoxybacillus flavithermus (strain DSM 21510 / WK1) protein is GTPase Obg.